The chain runs to 285 residues: Bifunctional protein FolD (285 aa).

NADP(+)-binding positions include 166–168 and Ile-232; that span reads GAS.

This sequence belongs to the tetrahydrofolate dehydrogenase/cyclohydrolase family. In terms of assembly, homodimer.

The enzyme catalyses (6R)-5,10-methylene-5,6,7,8-tetrahydrofolate + NADP(+) = (6R)-5,10-methenyltetrahydrofolate + NADPH. It carries out the reaction (6R)-5,10-methenyltetrahydrofolate + H2O = (6R)-10-formyltetrahydrofolate + H(+). It functions in the pathway one-carbon metabolism; tetrahydrofolate interconversion. Functionally, catalyzes the oxidation of 5,10-methylenetetrahydrofolate to 5,10-methenyltetrahydrofolate and then the hydrolysis of 5,10-methenyltetrahydrofolate to 10-formyltetrahydrofolate. This is Bifunctional protein FolD from Psychromonas ingrahamii (strain DSM 17664 / CCUG 51855 / 37).